The sequence spans 985 residues: SWI/SNF complex subunit SWI3D (985 aa).

The tract at residues 1–55 is disordered; that stretch reads MEEKRRDSAGTLAFAGSSGDSPASEPMPAPRRRGGGLKRKANALGGSNFFSSAPS. Over residues 30 to 41 the composition is skewed to basic residues; it reads PRRRGGGLKRKA. A coiled-coil region spans residues 108-133; the sequence is EKPKEEEERNKAIREWEALEAKIEAD. One can recognise an SWIRM domain in the interval 145–242; the sequence is HVVPNHCGWF…FHPFPPTDTG (98 aa). The segment at 305–359 adopts a ZZ-type; degenerate zinc-finger fold; that stretch reads AVEYHCNSCSADCSRKRYHCPKQADFDLCTECFNSGKFSSDMSSSDFILMEPAEA. Zn(2+) contacts are provided by C310, C313, C333, and C336. Residues 362–413 form the SANT domain; the sequence is VGSGKWTDQETLLLLEALEIFKENWNEIAEHVATKTKAQCMLHFLQMPIEDA. Composition is skewed to basic and acidic residues over residues 428-464, 493-502, and 615-661; these read TTDL…KEVP, AEQKTPKLET, and DNSH…EKQP. Disordered stretches follow at residues 428 to 502 and 591 to 814; these read TTDL…KLET and EDPP…EGKK. The span at 662–671 shows a compositional bias: polar residues; sequence GSRTENSTTK. Over residues 703 to 724 the composition is skewed to basic and acidic residues; that stretch reads CSGKELQEPLKDGNKLSSENKD. Residues 725 to 736 show a composition bias toward polar residues; it reads ASQSTVSQSAAD. Residues 742-776 show a composition bias toward basic and acidic residues; sequence ASRDVEMKDTLQSEKDPEDVVKTVGEKVQLAKEEG. The segment covering 780–800 has biased composition (polar residues); that stretch reads VLSTPDKSVSQQPIGSASAPE. Residues 839-900 adopt a coiled-coil conformation; sequence ISAAAVKAKN…EQLERSRQRL (62 aa). The segment at 944 to 985 is disordered; that stretch reads MAFPRPPMPRPPGFPVPGSFVAATTMTGSSDPSPGSDNVSSV. Positions 947-958 are enriched in pro residues; sequence PRPPMPRPPGFP. Positions 965 to 985 are enriched in polar residues; the sequence is AATTMTGSSDPSPGSDNVSSV.

Interacts with SWI3B, but not with BSH. Component of a RNA-directed DNA methylation (RdDM) complex that contains at least MORC6, MORC1/CRT1, MORC2, SWI3D and SUVH9. Interacts with MORC6 and SUVH9. Ubiquitously expressed.

Its subcellular location is the nucleus. In terms of biological role, component of a multiprotein complex equivalent of the SWI/SNF complex, an ATP-dependent chromatin-remodeling complex, which is required for the positive and negative regulation of gene expression of a large number of genes. It changes chromatin structure by altering DNA-histone contacts within a nucleosome, leading eventually to a change in nucleosome position, thus facilitating or repressing binding of gene-specific transcription factors. This Arabidopsis thaliana (Mouse-ear cress) protein is SWI/SNF complex subunit SWI3D (SWI3D).